A 399-amino-acid chain; its full sequence is Probable peptidoglycan glycosyltransferase FtsW (399 aa).

9 helical membrane passes run 33–53, 71–91, 98–118, 160–180, 182–202, 204–224, 287–307, 324–344, and 359–379; these read LVWLTLGLFSVGLIMVISTSI, IFYFFLIFLLSFIFLRTPIIF, IILIISIVLLVLVLLIGHSIH, FWGFFKPMSVIITQSMLLLAE, DLGTVVVLFFTTISVLFLSGA, IGQFFIIITVSILTIILLILL, IIGEELGYIGSFLILLIIFTI, IFSGFLACSIGIWLSFQTSIN, and LPFISYGGSSLIINSIAIFFL.

It belongs to the SEDS family. FtsW subfamily.

It is found in the cell inner membrane. The enzyme catalyses [GlcNAc-(1-&gt;4)-Mur2Ac(oyl-L-Ala-gamma-D-Glu-L-Lys-D-Ala-D-Ala)](n)-di-trans,octa-cis-undecaprenyl diphosphate + beta-D-GlcNAc-(1-&gt;4)-Mur2Ac(oyl-L-Ala-gamma-D-Glu-L-Lys-D-Ala-D-Ala)-di-trans,octa-cis-undecaprenyl diphosphate = [GlcNAc-(1-&gt;4)-Mur2Ac(oyl-L-Ala-gamma-D-Glu-L-Lys-D-Ala-D-Ala)](n+1)-di-trans,octa-cis-undecaprenyl diphosphate + di-trans,octa-cis-undecaprenyl diphosphate + H(+). It participates in cell wall biogenesis; peptidoglycan biosynthesis. Its function is as follows. Peptidoglycan polymerase that is essential for cell division. The sequence is that of Probable peptidoglycan glycosyltransferase FtsW from Buchnera aphidicola subsp. Acyrthosiphon pisum (strain APS) (Acyrthosiphon pisum symbiotic bacterium).